The following is a 196-amino-acid chain: Glycerol-3-phosphate acyltransferase (196 aa).

The next 4 membrane-spanning stretches (helical) occupy residues 3–23 (NAVF…ILVS), 78–98 (VGVV…PVFY), 112–132 (VLLA…IVVF), and 154–174 (WLLL…LLLI).

It belongs to the PlsY family. As to quaternary structure, probably interacts with PlsX.

It is found in the cell inner membrane. It catalyses the reaction an acyl phosphate + sn-glycerol 3-phosphate = a 1-acyl-sn-glycero-3-phosphate + phosphate. Its pathway is lipid metabolism; phospholipid metabolism. Catalyzes the transfer of an acyl group from acyl-phosphate (acyl-PO(4)) to glycerol-3-phosphate (G3P) to form lysophosphatidic acid (LPA). This enzyme utilizes acyl-phosphate as fatty acyl donor, but not acyl-CoA or acyl-ACP. The sequence is that of Glycerol-3-phosphate acyltransferase from Methylobacillus flagellatus (strain ATCC 51484 / DSM 6875 / VKM B-1610 / KT).